The chain runs to 467 residues: ATP synthase subunit beta (467 aa).

Glycine 156–threonine 163 provides a ligand contact to ATP.

The protein belongs to the ATPase alpha/beta chains family. F-type ATPases have 2 components, CF(1) - the catalytic core - and CF(0) - the membrane proton channel. CF(1) has five subunits: alpha(3), beta(3), gamma(1), delta(1), epsilon(1). CF(0) has three main subunits: a(1), b(2) and c(9-12). The alpha and beta chains form an alternating ring which encloses part of the gamma chain. CF(1) is attached to CF(0) by a central stalk formed by the gamma and epsilon chains, while a peripheral stalk is formed by the delta and b chains.

It localises to the cell membrane. It catalyses the reaction ATP + H2O + 4 H(+)(in) = ADP + phosphate + 5 H(+)(out). Functionally, produces ATP from ADP in the presence of a proton gradient across the membrane. The catalytic sites are hosted primarily by the beta subunits. This chain is ATP synthase subunit beta, found in Cytobacillus firmus (Bacillus firmus).